The primary structure comprises 21 residues: GKPDGAFXDNITVVESVXFXI.

Hemolymph.

It localises to the secreted. Binds and precipitates antigens of the parasite Echinostoma paraensei. The protein is Hemolymph 65 kDa lectin BG04 (BG04) of Biomphalaria glabrata (Bloodfluke planorb).